Here is an 876-residue protein sequence, read N- to C-terminus: DNA polymerase I (876 aa).

A 5'-3' exonuclease domain is found at 1-310; the sequence is MKNKLVLIDG…FAIADSVTDE (310 aa). Residues 289–876 form a subtilisin large fragment region; the sequence is TDEGEKPLAG…HYGPTWYDAK (588 aa). The polymerase stretch occupies residues 469-876; sequence EQDRLLTELE…HYGPTWYDAK (408 aa).

The protein belongs to the DNA polymerase type-A family. In terms of assembly, single-chain monomer with multiple functions.

The catalysed reaction is DNA(n) + a 2'-deoxyribonucleoside 5'-triphosphate = DNA(n+1) + diphosphate. In terms of biological role, in addition to polymerase activity, the recombinant enzyme has strand displacement and 5'-3' exonuclease activity, but lacks proofreading 3'-5' exonuclease activity. The sequence is that of DNA polymerase I (polA) from Geobacillus stearothermophilus (Bacillus stearothermophilus).